We begin with the raw amino-acid sequence, 480 residues long: MLNRLRRTKIVATLGPSTDINNNLEKIIRSGVNVLRFNFSHGSKDEHKSRANQAREIMTRLNFHIALLGDLQGPKIRISKFIKNNIFLNVGDFFILDANLDQNNGNQERVGIDYKQLPYDLKVGDVLLLDDGRIQLKVIKSTGHEILTKVVIGGILSNNKGINKLGGGLSADALTEKDKKDIILATEINVDYLAISFPRCSNDLKQARKLAKEFGSNAKIIAKIERAEAVLNQNTIEDIILASDAIMIARGDLGVEIGDSELAGIQKKLIRTARQLNRIVITATQMMESMITNPLPTRAEVMDVANAVLDGSDAVMLSAETASGEYPAETVIKMAKICKGAEKVPSINVSRHRIHAKFDDIEEAIAMSAMYVANHLKGITAIITMTESGKTALMTSRITSGLPIFALSKNKETLNLASLYRGVTPIYFNSKNNNFKAANEAIVLLRKRGFLCRGELVIITQGDIMGKIGKTNTSRILKVV.

Arginine 36 is a binding site for substrate. Residues asparagine 38, serine 40, and aspartate 70 each contribute to the K(+) site. Residue asparagine 38–histidine 41 coordinates ATP. Positions 77 and 160 each coordinate ATP. Glutamate 225 is a binding site for Mg(2+). Substrate contacts are provided by glycine 251, aspartate 252, and threonine 284. Aspartate 252 provides a ligand contact to Mg(2+).

This sequence belongs to the pyruvate kinase family. Homotetramer. Requires Mg(2+) as cofactor. The cofactor is K(+).

It carries out the reaction pyruvate + ATP = phosphoenolpyruvate + ADP + H(+). The protein operates within carbohydrate degradation; glycolysis; pyruvate from D-glyceraldehyde 3-phosphate: step 5/5. Its activity is regulated as follows. Allosterically activated by AMP and by several sugar phosphates. Belongs to type II PK. The chain is Pyruvate kinase (pykA) from Buchnera aphidicola subsp. Acyrthosiphon pisum (strain APS) (Acyrthosiphon pisum symbiotic bacterium).